Here is a 323-residue protein sequence, read N- to C-terminus: Glutathione synthetase (323 aa).

Residues 133 to 317 enclose the ATP-grasp domain; sequence KMYALQFQSV…IGDQTIAALE (185 aa). 159–215 serves as a coordination point for ATP; sequence LDELRAAVLKPLGGKAGEGILFLDPGDRNFNSLVEISTQQGQLPVMVQQYLPEAKDG. Positions 288 and 290 each coordinate Mg(2+).

Belongs to the prokaryotic GSH synthase family. Mg(2+) serves as cofactor. Requires Mn(2+) as cofactor.

The enzyme catalyses gamma-L-glutamyl-L-cysteine + glycine + ATP = glutathione + ADP + phosphate + H(+). Its pathway is sulfur metabolism; glutathione biosynthesis; glutathione from L-cysteine and L-glutamate: step 2/2. In Synechococcus elongatus (strain ATCC 33912 / PCC 7942 / FACHB-805) (Anacystis nidulans R2), this protein is Glutathione synthetase.